Reading from the N-terminus, the 30-residue chain is Bacteriocin curvaticin (30 aa).

Cys-9 and Cys-14 are disulfide-bonded.

Its subcellular location is the secreted. Functionally, has antibacterial activity against the Gram-positive bacterium L.monocytogenes. The chain is Bacteriocin curvaticin from Latilactobacillus curvatus (Lactobacillus curvatus).